A 758-amino-acid chain; its full sequence is Vitamin K-dependent gamma-carboxylase (758 aa).

Residues 1–21 (MAVSARSARTSPGSDKVQKDK) form a disordered region. Ala-2 carries the N-acetylalanine modification. Topologically, residues 2 to 60 (AVSARSARTSPGSDKVQKDKAELISGPRQDSLMGKLLGFEWTDLSSWRRLVTLLNRPTD) are cytoplasmic. Residues 61–81 (PASLAVFRFLFGFLMVLDIPQ) traverse the membrane as a helical segment. At 82–113 (ERGLSSLDRKYLDGLDVCRFPLLDALRPLPLD) the chain is on the lumenal side. Residues Cys-99 and Cys-450 are joined by a disulfide bond. A helical membrane pass occupies residues 114–134 (WMYLVYTIMFLGALGMMLGLC). The Cytoplasmic portion of the chain corresponds to 135-136 (YR). A helical transmembrane segment spans residues 137-157 (ISCVLFLLPYWYVFLLDKTSW). Residues 158–292 (NNHSYLYGLL…VSYFHCMNSQ (135 aa)) lie on the Lumenal side of the membrane. A helical transmembrane segment spans residues 293–313 (LFSIGMFSYVMLASSPLFCSP). The Cytoplasmic segment spans residues 314-361 (EWPRKLVSYCPQRLQELLPLKAAPQPSVSCVYKRSRGKSGQKPGLRHQ). A helical membrane pass occupies residues 362–382 (LGAAFTLLYLLEQLFLPYSHF). Topologically, residues 383–758 (LTQGYNNWTN…SNPDPVHSEF (376 aa)) are lumenal. The interval 732–758 (GELSPSNMDSSHSNPPESNPDPVHSEF) is disordered. Polar residues predominate over residues 735 to 747 (SPSNMDSSHSNPP).

It belongs to the vitamin K-dependent gamma-carboxylase family. As to quaternary structure, monomer. May interact with CALU.

The protein localises to the endoplasmic reticulum membrane. The catalysed reaction is 4-carboxy-L-glutamyl-[protein] + 2,3-epoxyphylloquinone + H2O + H(+) = phylloquinol + L-glutamyl-[protein] + CO2 + O2. In terms of biological role, mediates the vitamin K-dependent carboxylation of glutamate residues to calcium-binding gamma-carboxyglutamate (Gla) residues with the concomitant conversion of the reduced hydroquinone form of vitamin K to vitamin K epoxide. Catalyzes gamma-carboxylation of various proteins, such as blood coagulation factors (F2, F7, F9 and F10), osteocalcin (BGLAP) or matrix Gla protein (MGP). This Pongo abelii (Sumatran orangutan) protein is Vitamin K-dependent gamma-carboxylase (GGCX).